A 689-amino-acid polypeptide reads, in one-letter code: Beta-adrenergic receptor kinase 1 (689 aa).

An N-terminal region spans residues 1–190 (MADLEAVLAD…ELNIHLTMND (190 aa)). The region spanning 54-175 (TFEKIFSQKL…IESDKFTRFC (122 aa)) is the RGS domain. One can recognise a Protein kinase domain in the interval 191 to 453 (FSVHRIIGRG…AQEVKESPFF (263 aa)). ATP contacts are provided by residues 197 to 205 (IGRGGFGEV) and lysine 220. The Proton acceptor role is filled by aspartate 317. In terms of domain architecture, AGC-kinase C-terminal spans 454-521 (RSLDWQMVFL…TISERWQQEV (68 aa)). The 95-residue stretch at 558–652 (DCIMHGYMSK…WKKELRDAYR (95 aa)) folds into the PH domain. Serine 670 is modified (phosphoserine).

It belongs to the protein kinase superfamily. AGC Ser/Thr protein kinase family. GPRK subfamily. As to quaternary structure, interacts with the heterodimer formed by GNB1 and GNG2. Interacts with GIT1. Interacts with, and phosphorylates chemokine-stimulated CCR5. Interacts with ARRB1. Interacts with LPAR1 and LPAR2. Interacts with RALA in response to LPAR1 activation. ADRBK1 and RALA mutually inhibit each other's binding to LPAR1. Interacts with ADRB2.

It localises to the cytoplasm. Its subcellular location is the cell membrane. It is found in the postsynapse. The protein resides in the presynapse. It catalyses the reaction [beta-adrenergic receptor] + ATP = [beta-adrenergic receptor]-phosphate + ADP + H(+). With respect to regulation, in contrast to other AGC family kinases, the catalytic activity is solely regulated by the binding of substrates and ligands, not by phosphorylation of the kinase domain. Functionally, specifically phosphorylates the agonist-occupied form of the beta-adrenergic and closely related receptors, probably inducing a desensitization of them. Key regulator of LPAR1 signaling. Competes with RALA for binding to LPAR1 thus affecting the signaling properties of the receptor. Desensitizes LPAR1 and LPAR2 in a phosphorylation-independent manner. Positively regulates ciliary smoothened (SMO)-dependent Hedgehog (Hh) signaling pathway by facilitating the trafficking of SMO into the cilium and the stimulation of SMO activity. Inhibits relaxation of airway smooth muscle in response to blue light. The polypeptide is Beta-adrenergic receptor kinase 1 (Mesocricetus auratus (Golden hamster)).